Consider the following 276-residue polypeptide: uncharacterized protein (276 aa).

An AB hydrolase-1 domain is found at proline 20 to serine 137. Residues glycine 57–tyrosine 76 are disordered.

Belongs to the AB hydrolase superfamily.

This is an uncharacterized protein from Staphylococcus aureus (strain USA300).